The primary structure comprises 141 residues: Hemoglobin subunit alpha (141 aa).

The Globin domain maps to 1–141 (VLSSADKNNV…VSTVLTSKYR (141 aa)). Ser3 carries the post-translational modification Phosphoserine. An N6-succinyllysine mark is found at Lys7 and Lys11. The residue at position 16 (Lys16) is an N6-acetyllysine; alternate. Lys16 carries the post-translational modification N6-succinyllysine; alternate. Tyr24 carries the post-translational modification Phosphotyrosine. Position 35 is a phosphoserine (Ser35). Position 40 is an N6-succinyllysine (Lys40). Ser49 is modified (phosphoserine). His58 contributes to the O2 binding site. Residue His87 coordinates heme b. The residue at position 102 (Ser102) is a Phosphoserine. Thr108 is modified (phosphothreonine). Ser124 is subject to Phosphoserine. Residues Thr134 and Thr137 each carry the phosphothreonine modification. Ser138 is modified (phosphoserine).

It belongs to the globin family. Heterotetramer of two alpha chains and two beta chains. Red blood cells.

Involved in oxygen transport from the lung to the various peripheral tissues. Its function is as follows. Hemopressin acts as an antagonist peptide of the cannabinoid receptor CNR1. Hemopressin-binding efficiently blocks cannabinoid receptor CNR1 and subsequent signaling. This Panthera pardus saxicolor (Northern Persian leopard) protein is Hemoglobin subunit alpha (HBA).